Reading from the N-terminus, the 712-residue chain is Polyribonucleotide nucleotidyltransferase (712 aa).

D487 and D493 together coordinate Mg(2+). One can recognise a KH domain in the interval 554-613 (PRIEVMNIPVDKIREVIGSGGKVIREIVEKTGAKINIEDDGTVKIASSSGKEIEAARKWI). Positions 623 to 691 (GQIYEGTVVK…ERGKVRLSMK (69 aa)) constitute an S1 motif domain.

The protein belongs to the polyribonucleotide nucleotidyltransferase family. It depends on Mg(2+) as a cofactor.

Its subcellular location is the cytoplasm. It catalyses the reaction RNA(n+1) + phosphate = RNA(n) + a ribonucleoside 5'-diphosphate. Functionally, involved in mRNA degradation. Catalyzes the phosphorolysis of single-stranded polyribonucleotides processively in the 3'- to 5'-direction. This is Polyribonucleotide nucleotidyltransferase from Rhizobium etli (strain CIAT 652).